Here is a 311-residue protein sequence, read N- to C-terminus: Putative HTH-type transcriptional regulatory protein PTO0557 (311 aa).

One can recognise an HTH cro/C1-type domain in the interval 132 to 186; it reads MRRIRELKGYSVGYLSSKLGISRRSISLYESGSSATIDIYLKLEETLGEDLTKDI. Residues 143–162 constitute a DNA-binding region (H-T-H motif); sequence VGYLSSKLGISRRSISLYES.

The polypeptide is Putative HTH-type transcriptional regulatory protein PTO0557 (Picrophilus torridus (strain ATCC 700027 / DSM 9790 / JCM 10055 / NBRC 100828 / KAW 2/3)).